Consider the following 160-residue polypeptide: Negative modulator of initiation of replication (160 aa).

It belongs to the SeqA family. As to quaternary structure, homodimer. Polymerizes to form helical filaments.

The protein resides in the cytoplasm. Functionally, negative regulator of replication initiation, which contributes to regulation of DNA replication and ensures that replication initiation occurs exactly once per chromosome per cell cycle. Binds to pairs of hemimethylated GATC sequences in the oriC region, thus preventing assembly of replication proteins and re-initiation at newly replicated origins. Repression is relieved when the region becomes fully methylated. The protein is Negative modulator of initiation of replication of Idiomarina loihiensis (strain ATCC BAA-735 / DSM 15497 / L2-TR).